A 318-amino-acid chain; its full sequence is Ribosome biogenesis protein RLP7 (318 aa).

Disordered regions lie at residues 1-49 (MSQP…NRFV) and 101-121 (AGSKATSESELQDVDEEDEED). The span at 19–40 (ADRTRLEKQELAKKRKEQEEKQ) shows a compositional bias: basic and acidic residues. Residues 110–121 (ELQDVDEEDEED) are compositionally biased toward acidic residues.

It belongs to the universal ribosomal protein uL30 family.

Its subcellular location is the nucleus. The protein resides in the nucleolus. Its function is as follows. Involved in the biogenesis of the 60S ribosomal subunit. May act as a specificity factor that binds precursor rRNAs and tethers the enzymes that carry out the early 5' to 3' exonucleolytic reactions that generate the mature rRNAs. This Kluyveromyces lactis (strain ATCC 8585 / CBS 2359 / DSM 70799 / NBRC 1267 / NRRL Y-1140 / WM37) (Yeast) protein is Ribosome biogenesis protein RLP7 (RLP7).